We begin with the raw amino-acid sequence, 235 residues long: Golgi to ER traffic protein 1 (235 aa).

Met-1 is a topological domain (lumenal). The helical transmembrane segment at 2-21 threads the bilayer; sequence HWAAAVAIFFIVVTKFLQYT. The Cytoplasmic segment spans residues 22-104; sequence NKYHEKWISK…AFQAHLHKLR (83 aa). The stretch at 68 to 104 forms a coiled coil; it reads WTKNNRKLDSLDKEINNLKDEIQSENKAFQAHLHKLR. A helical transmembrane segment spans residues 105-125; it reads LLALTVPFFVFKIMYGKTPVY. Residues 126 to 181 lie on the Lumenal side of the membrane; the sequence is KLSSSTSTLFPTFVSGVWSQGWLYVLLHPLRTISQKWHIMEGKFGASKFDDMALQS. The chain crosses the membrane as a helical span at residues 182–198; sequence VSLGIWVWALMNVINGV. Residues 199–235 are Cytoplasmic-facing; it reads EFIVKQLFLTPKMEAPASVETQEEKALDAVDDAIILD.

Belongs to the WRB/GET1 family. Component of the Golgi to ER traffic (GET) complex, which is composed of GET1, GET2 and GET3. Within the complex, GET1 and GET2 form a heterotetramer which is stabilized by phosphatidylinositol binding and which binds to the GET3 homodimer.

Its subcellular location is the endoplasmic reticulum membrane. The protein resides in the golgi apparatus membrane. In terms of biological role, required for the post-translational delivery of tail-anchored (TA) proteins to the endoplasmic reticulum. Together with GET2, acts as a membrane receptor for soluble GET3, which recognizes and selectively binds the transmembrane domain of TA proteins in the cytosol. The GET complex cooperates with the HDEL receptor ERD2 to mediate the ATP-dependent retrieval of resident ER proteins that contain a C-terminal H-D-E-L retention signal from the Golgi to the ER. In Saccharomyces cerevisiae (strain RM11-1a) (Baker's yeast), this protein is Golgi to ER traffic protein 1.